Here is an 881-residue protein sequence, read N- to C-terminus: Envelope glycoprotein gp160 (881 aa).

The signal sequence occupies residues 1 to 19 (MGCLGNQLLIAILLLSVYG). Residues 20 to 696 (IYCTQYVTVF…ASWIKYIQYG (677 aa)) lie on the Extracellular side of the membrane. A glycan (N-linked (GlcNAc...) asparagine; by host) is linked at Asn37. Cys44 and Cys57 are joined by a disulfide. N-linked (GlcNAc...) asparagine; by host glycosylation is found at Asn70, Asn114, Asn148, Asn158, Asn186, Asn200, Asn204, Asn214, Asn246, Asn249, Asn280, Asn286, Asn297, Asn308, Asn318, Asn373, and Asn379. Disulfide bonds link Cys101-Cys222, Cys108-Cys213, Cys113-Cys170, Cys235-Cys265, and Cys245-Cys257. A V1 region spans residues 113 to 169 (CNKSETDRWGLTKSSTTITTAAPTSAPVSEKIDMVNETSSCIAQNNCTGLEQEQMIS). The V2 stretch occupies residues 170-213 (CKFTMTGLKRDKTKEYNETWYSTDLVCEQGNSTDNESRCYMNHC). The V3 stretch occupies residues 313–345 (CRRPGNKTVLPVTIMSGLVFHSQPLTDRPKQAW). Residues Cys313 and Cys346 are joined by a disulfide bond. Cystine bridges form between Cys397/Cys461 and Cys404/Cys434. A V4 region spans residues 404 to 434 (CKMNWFLNWVEDRDVTTQRPKERHRRNYVPC). Asn462 and Asn478 each carry an N-linked (GlcNAc...) asparagine; by host glycan. The interval 477 to 484 (GNQTSITM) is V5. The tract at residues 528–548 (GVFVLGFLGFLATAGSAMGAA) is fusion peptide. The segment at 591–607 (LQTRVTAIEKYLEDQAQ) is immunosuppression. N-linked (GlcNAc...) asparagine; by host glycosylation is found at Asn627, Asn636, and Asn652. Residues 636 to 668 (NDTWQEWERKVDFLEENITALLEEAQIQQEKNM) adopt a coiled-coil conformation. Residues 673–694 (KLNSWDVFGNWFDLASWIKYIQ) are MPER; binding to GalCer. Residues 697-717 (IYVVVGVILLRIVIYIVQMLA) form a helical membrane-spanning segment. At 718–881 (KLRQGYRPVF…IRQGLELTLL (164 aa)) the chain is on the cytoplasmic side. The YXXV motif; contains endocytosis signal signature appears at 723–726 (YRPV). Positions 737-761 (THTQQDPALPTREGKEGDGGEGGGN) are disordered. Residue Cys789 is the site of S-palmitoyl cysteine; by host attachment. The short motif at 880-881 (LL) is the Di-leucine internalization motif element.

As to quaternary structure, the mature envelope protein (Env) consists of a homotrimer of non-covalently associated gp120-gp41 heterodimers. The resulting complex protrudes from the virus surface as a spike. Interacts with host CD4 and CCR5. Gp120 also interacts with the C-type lectins CD209/DC-SIGN and CLEC4M/DC-SIGNR (collectively referred to as DC-SIGN(R)). In terms of assembly, the mature envelope protein (Env) consists of a homotrimer of non-covalently associated gp120-gp41 heterodimers. The resulting complex protrudes from the virus surface as a spike. Post-translationally, specific enzymatic cleavages in vivo yield mature proteins. Envelope glycoproteins are synthesized as an inactive precursor that is heavily N-glycosylated and processed likely by host cell furin in the Golgi to yield the mature SU and TM proteins. The cleavage site between SU and TM requires the minimal sequence [KR]-X-[KR]-R. In terms of processing, palmitoylation of the transmembrane protein and of Env polyprotein (prior to its proteolytic cleavage) is essential for their association with host cell membrane lipid rafts. Palmitoylation is therefore required for envelope trafficking to classical lipid rafts, but not for viral replication.

The protein resides in the virion membrane. The protein localises to the host cell membrane. Its subcellular location is the host endosome membrane. In terms of biological role, the surface protein gp120 (SU) attaches the virus to the host lymphoid cell by binding to the primary receptor CD4. This interaction induces a structural rearrangement creating a high affinity binding site for a chemokine coreceptor like CCR5. This peculiar 2 stage receptor-interaction strategy allows gp120 to maintain the highly conserved coreceptor-binding site in a cryptic conformation, protected from neutralizing antibodies. These changes are transmitted to the transmembrane protein gp41 and are thought to activate its fusogenic potential by unmasking its fusion peptide. Its function is as follows. Surface protein gp120 (SU) may target the virus to gut-associated lymphoid tissue (GALT) by binding host ITGA4/ITGB7 (alpha-4/beta-7 integrins), a complex that mediates T-cell migration to the GALT. Interaction between gp120 and ITGA4/ITGB7 would allow the virus to enter GALT early in the infection, infecting and killing most of GALT's resting CD4+ T-cells. This T-cell depletion is believed to be the major insult to the host immune system leading to AIDS. Functionally, the surface protein gp120 is a ligand for CD209/DC-SIGN and CLEC4M/DC-SIGNR, which are respectively found on dendritic cells (DCs), and on endothelial cells of liver sinusoids and lymph node sinuses. These interactions allow capture of viral particles at mucosal surfaces by these cells and subsequent transmission to permissive cells. DCs are professional antigen presenting cells, critical for host immunity by inducing specific immune responses against a broad variety of pathogens. They act as sentinels in various tissues where they take up antigen, process it, and present it to T-cells following migration to lymphoid organs. SIV subverts the migration properties of dendritic cells to gain access to CD4+ T-cells in lymph nodes. Virus transmission to permissive T-cells occurs either in trans (without DCs infection, through viral capture and transmission), or in cis (following DCs productive infection, through the usual CD4-gp120 interaction), thereby inducing a robust infection. In trans infection, bound virions remain infectious over days and it is proposed that they are not degraded, but protected in non-lysosomal acidic organelles within the DCs close to the cell membrane thus contributing to the viral infectious potential during DCs' migration from the periphery to the lymphoid tissues. On arrival at lymphoid tissues, intact virions recycle back to DCs' cell surface allowing virus transmission to CD4+ T-cells. Virion capture also seems to lead to MHC-II-restricted viral antigen presentation, and probably to the activation of SIV-specific CD4+ cells. The transmembrane protein gp41 (TM) acts as a class I viral fusion protein. Under the current model, the protein has at least 3 conformational states: pre-fusion native state, pre-hairpin intermediate state, and post-fusion hairpin state. During fusion of viral and target intracellular membranes, the coiled coil regions (heptad repeats) assume a trimer-of-hairpins structure, positioning the fusion peptide in close proximity to the C-terminal region of the ectodomain. The formation of this structure appears to drive apposition and subsequent fusion of viral and target cell membranes. Complete fusion occurs in host cell endosomes. The virus undergoes clathrin-dependent internalization long before endosomal fusion, thus minimizing the surface exposure of conserved viral epitopes during fusion and reducing the efficacy of inhibitors targeting these epitopes. Membranes fusion leads to delivery of the nucleocapsid into the cytoplasm. In terms of biological role, the envelope glycoprotein gp160 precursor down-modulates cell surface CD4 antigen by interacting with it in the endoplasmic reticulum and blocking its transport to the cell surface. Its function is as follows. The gp120-gp41 heterodimer allows rapid transcytosis of the virus through CD4 negative cells such as simple epithelial monolayers of the intestinal, rectal and endocervical epithelial barriers. Both gp120 and gp41 specifically recognize glycosphingolipids galactosyl-ceramide (GalCer) or 3' sulfo-galactosyl-ceramide (GalS) present in the lipid rafts structures of epithelial cells. Binding to these alternative receptors allows the rapid transcytosis of the virus through the epithelial cells. This transcytotic vesicle-mediated transport of virions from the apical side to the basolateral side of the epithelial cells does not involve infection of the cells themselves. The chain is Envelope glycoprotein gp160 (env) from Simian immunodeficiency virus (isolate K6W) (SIV-mac).